The following is a 561-amino-acid chain: Oxygen-dependent choline dehydrogenase (561 aa).

6-35 (DYIIIGAGSAGNVLATRLTEDADVSVLLLE) contributes to the FAD binding site. Residue His-475 is the Proton acceptor of the active site.

This sequence belongs to the GMC oxidoreductase family. Requires FAD as cofactor.

It catalyses the reaction choline + A = betaine aldehyde + AH2. The catalysed reaction is betaine aldehyde + NAD(+) + H2O = glycine betaine + NADH + 2 H(+). It participates in amine and polyamine biosynthesis; betaine biosynthesis via choline pathway; betaine aldehyde from choline (cytochrome c reductase route): step 1/1. In terms of biological role, involved in the biosynthesis of the osmoprotectant glycine betaine. Catalyzes the oxidation of choline to betaine aldehyde and betaine aldehyde to glycine betaine at the same rate. The sequence is that of Oxygen-dependent choline dehydrogenase from Pseudomonas aeruginosa (strain UCBPP-PA14).